We begin with the raw amino-acid sequence, 198 residues long: Probable molybdenum cofactor guanylyltransferase (198 aa).

Residues 9-11, K22, D66, and D95 each bind GTP; that span reads LAG. Residue D95 coordinates Mg(2+).

It belongs to the MobA family. Requires Mg(2+) as cofactor.

Its subcellular location is the cytoplasm. The catalysed reaction is Mo-molybdopterin + GTP + H(+) = Mo-molybdopterin guanine dinucleotide + diphosphate. Its function is as follows. Transfers a GMP moiety from GTP to Mo-molybdopterin (Mo-MPT) cofactor (Moco or molybdenum cofactor) to form Mo-molybdopterin guanine dinucleotide (Mo-MGD) cofactor. This chain is Probable molybdenum cofactor guanylyltransferase, found in Clostridium perfringens (strain SM101 / Type A).